The following is a 130-amino-acid chain: Small ribosomal subunit protein uS11 (130 aa).

Belongs to the universal ribosomal protein uS11 family. Part of the 30S ribosomal subunit. Interacts with proteins S7 and S18. Binds to IF-3.

Functionally, located on the platform of the 30S subunit, it bridges several disparate RNA helices of the 16S rRNA. Forms part of the Shine-Dalgarno cleft in the 70S ribosome. The chain is Small ribosomal subunit protein uS11 from Gloeobacter violaceus (strain ATCC 29082 / PCC 7421).